The primary structure comprises 118 residues: Large ribosomal subunit protein uL18 (118 aa).

It belongs to the universal ribosomal protein uL18 family. In terms of assembly, part of the 50S ribosomal subunit; part of the 5S rRNA/L5/L18/L25 subcomplex. Contacts the 5S and 23S rRNAs.

In terms of biological role, this is one of the proteins that bind and probably mediate the attachment of the 5S RNA into the large ribosomal subunit, where it forms part of the central protuberance. The polypeptide is Large ribosomal subunit protein uL18 (Nitratiruptor sp. (strain SB155-2)).